A 310-amino-acid polypeptide reads, in one-letter code: 26S proteasome non-ATPase regulatory subunit 14 (310 aa).

The MPN domain occupies 31–166 (VYISSLALLK…IDAFRLINAN (136 aa)). Zn(2+) contacts are provided by H113, H115, and D126. Positions 113–126 (HSHPGFGCWLSGVD) match the JAMM motif motif. Residues S150 and S224 each carry the phosphoserine modification. The residue at position 266 (T266) is a Phosphothreonine.

This sequence belongs to the peptidase M67A family. PSMD14 subfamily. As to quaternary structure, component of the 19S proteasome regulatory particle complex. The 26S proteasome consists of a 20S core particle (CP) and two 19S regulatory subunits (RP). The regulatory particle is made of a lid composed of 9 subunits including PSMD4, a base containing 6 ATPases and few additional components. Within the complex, PSMD4 interacts with subunit PSMD7 through their respective MPN domain. Interacts with TXNL1. As to expression, widely expressed. Highest levels in heart and skeletal muscle.

Functionally, component of the 26S proteasome, a multiprotein complex involved in the ATP-dependent degradation of ubiquitinated proteins. This complex plays a key role in the maintenance of protein homeostasis by removing misfolded or damaged proteins, which could impair cellular functions, and by removing proteins whose functions are no longer required. Therefore, the proteasome participates in numerous cellular processes, including cell cycle progression, apoptosis, or DNA damage repair. The PSMD14 subunit is a metalloprotease that specifically cleaves 'Lys-63'-linked polyubiquitin chains within the complex. Plays a role in response to double-strand breaks (DSBs): acts as a regulator of non-homologous end joining (NHEJ) by cleaving 'Lys-63'-linked polyubiquitin, thereby promoting retention of JMJD2A/KDM4A on chromatin and restricting TP53BP1 accumulation. Also involved in homologous recombination repair by promoting RAD51 loading. This is 26S proteasome non-ATPase regulatory subunit 14 (PSMD14) from Homo sapiens (Human).